Reading from the N-terminus, the 251-residue chain is MILYEYPFNERIRTLLRLEDLFERFTFFLTQEDAREHHVALTTLFEISEVAGRADLKSDLMKELERQRQTLAPFRGNPGIEQNALEAVLGEIEQTLSGLSQMQGKTGQHLADNEWLASIRSRAIIPGGTCKFDLPSYYAWQQLHPDQRRQDIAKWVTPLLPLRDAATIVLRLARESGQASKVMAMQGSYQQMLSGRSYQLMQVRVAPELRVIPEASANKYMLWVRFTVQDGDLRPRAVDVDVPFQLTLCSL.

The protein belongs to the ZapD family. As to quaternary structure, interacts with FtsZ.

Its subcellular location is the cytoplasm. In terms of biological role, cell division factor that enhances FtsZ-ring assembly. Directly interacts with FtsZ and promotes bundling of FtsZ protofilaments, with a reduction in FtsZ GTPase activity. The polypeptide is Cell division protein ZapD (Paraburkholderia xenovorans (strain LB400)).